The primary structure comprises 285 residues: MLFNAVHNSLPPNIDIDHAILRGEDHPPTCAKCVARGRISALGSLDLRYHSLRCYAAPPDVGRCEFVPPRRRVLIANQGLDVSRLPPTGTVTLLLADVEESTHLWQMCPEDMATAIAHLDHTVSEAITNHGGVQPVKRYEGDSFVAAFTRASDAAACALDLQRTSLAPIRLRIGLHTGEVQLRDELYVGPTINRTARLRDLAHGGQVVLSAATGDLVTGRLPADAWLVDLGRHPLRGLPRPEWVMQLCHPDIREKFPPLRTAKSSPTSILPAQFTTFVGRRAQIS.

One can recognise a Guanylate cyclase domain in the interval 92–199 (TLLLADVEES…PTINRTARLR (108 aa)).

It belongs to the adenylyl cyclase class-4/guanylyl cyclase family.

This is an uncharacterized protein from Mycobacterium tuberculosis (strain CDC 1551 / Oshkosh).